The following is a 267-amino-acid chain: 4-diphosphocytidyl-2-C-methyl-D-erythritol kinase (267 aa).

Residue Lys8 is part of the active site. ATP is bound at residue 90–100 (PIGAGLGGGSS). The active site involves Asp132.

Belongs to the GHMP kinase family. IspE subfamily.

It carries out the reaction 4-CDP-2-C-methyl-D-erythritol + ATP = 4-CDP-2-C-methyl-D-erythritol 2-phosphate + ADP + H(+). It functions in the pathway isoprenoid biosynthesis; isopentenyl diphosphate biosynthesis via DXP pathway; isopentenyl diphosphate from 1-deoxy-D-xylulose 5-phosphate: step 3/6. Catalyzes the phosphorylation of the position 2 hydroxy group of 4-diphosphocytidyl-2C-methyl-D-erythritol. The sequence is that of 4-diphosphocytidyl-2-C-methyl-D-erythritol kinase from Azobacteroides pseudotrichonymphae genomovar. CFP2.